A 62-amino-acid polypeptide reads, in one-letter code: Large ribosomal subunit protein uL29 (62 aa).

Belongs to the universal ribosomal protein uL29 family.

The polypeptide is Large ribosomal subunit protein uL29 (Ruthia magnifica subsp. Calyptogena magnifica).